The following is a 313-amino-acid chain: Olfactory receptor 10Z1 (313 aa).

The Extracellular segment spans residues 1–25 (MGQTNVTSWRDFVFLGFSSSGELQL). An N-linked (GlcNAc...) asparagine glycan is attached at N5. A helical membrane pass occupies residues 26-46 (LLFALFLSLYLVTLTSNVFII). Residues 47–54 (IAIRLDSH) are Cytoplasmic-facing. Residues 55–75 (LHTPMYLFLSFLSFSETCYTL) traverse the membrane as a helical segment. At 76 to 99 (GIIPRMLSGLAGGDQAISYVGCAA) the chain is on the extracellular side. An intrachain disulfide couples C97 to C189. The helical transmembrane segment at 100-120 (QMFFSASWACTNCFLLAAMGF) threads the bilayer. Over 121 to 139 (DRYVAICAPLHYASHMNPT) the chain is Cytoplasmic. Residues 140 to 160 (LCAQLVITSFLTGYLFGLGMT) form a helical membrane-spanning segment. Over 161-197 (LVIFHLSFCSSHEIQHFFCDTPPVLSLACGDTGPSEL) the chain is Extracellular. The helical transmembrane segment at 198–217 (RIFILSLLVLLVSFFFITIS) threads the bilayer. Topologically, residues 218–237 (YAYILAAILRIPSAEGQKKA) are cytoplasmic. Residues 238–258 (FSTCASHLTVVIIHYGCASFV) form a helical membrane-spanning segment. The Extracellular segment spans residues 259–271 (YLRPKASYSLERD). Residues 272-292 (QLIAMTYTVVTPLLNPIVYSL) traverse the membrane as a helical segment. Over 293–313 (RNRAIQTALRNAFRGRLLGKG) the chain is Cytoplasmic.

The protein belongs to the G-protein coupled receptor 1 family.

The protein resides in the cell membrane. Its function is as follows. Odorant receptor. This is Olfactory receptor 10Z1 (OR10Z1) from Homo sapiens (Human).